Consider the following 504-residue polypeptide: Glutamate--tRNA ligase (504 aa).

The 'HIGH' region signature appears at 25–35; the sequence is PSPTGNPHVGL. 4 residues coordinate Zn(2+): Cys122, Cys124, Cys149, and Glu151. The 'KMSKS' region motif lies at 270–274; sequence KLSKR. Lys273 is a binding site for ATP.

The protein belongs to the class-I aminoacyl-tRNA synthetase family. Glutamate--tRNA ligase type 1 subfamily. In terms of assembly, monomer. Requires Zn(2+) as cofactor.

It is found in the cytoplasm. It carries out the reaction tRNA(Glu) + L-glutamate + ATP = L-glutamyl-tRNA(Glu) + AMP + diphosphate. Functionally, catalyzes the attachment of glutamate to tRNA(Glu) in a two-step reaction: glutamate is first activated by ATP to form Glu-AMP and then transferred to the acceptor end of tRNA(Glu). In Streptomyces avermitilis (strain ATCC 31267 / DSM 46492 / JCM 5070 / NBRC 14893 / NCIMB 12804 / NRRL 8165 / MA-4680), this protein is Glutamate--tRNA ligase.